The following is a 315-amino-acid chain: Aspartate carbamoyltransferase catalytic subunit (315 aa).

Positions 65 and 66 each coordinate carbamoyl phosphate. An L-aspartate-binding site is contributed by lysine 93. The carbamoyl phosphate site is built by arginine 115, histidine 145, and glutamine 148. Arginine 179 and arginine 234 together coordinate L-aspartate. The carbamoyl phosphate site is built by glycine 275 and proline 276.

This sequence belongs to the aspartate/ornithine carbamoyltransferase superfamily. ATCase family. As to quaternary structure, heterododecamer (2C3:3R2) of six catalytic PyrB chains organized as two trimers (C3), and six regulatory PyrI chains organized as three dimers (R2).

It catalyses the reaction carbamoyl phosphate + L-aspartate = N-carbamoyl-L-aspartate + phosphate + H(+). Its pathway is pyrimidine metabolism; UMP biosynthesis via de novo pathway; (S)-dihydroorotate from bicarbonate: step 2/3. Its function is as follows. Catalyzes the condensation of carbamoyl phosphate and aspartate to form carbamoyl aspartate and inorganic phosphate, the committed step in the de novo pyrimidine nucleotide biosynthesis pathway. This is Aspartate carbamoyltransferase catalytic subunit from Xanthomonas oryzae pv. oryzae (strain MAFF 311018).